A 556-amino-acid chain; its full sequence is Genetic interactor of prohibitins 3, mitochondrial (556 aa).

A mitochondrion-targeting transit peptide spans 1-21 (MLNLCHALRGVRQFSCSVIVK). Residues 113 to 305 (ESTLNDILNY…LFDLPGYSTS (193 aa)) form the CP-type G domain.

Belongs to the TRAFAC class YlqF/YawG GTPase family. GEP3 subfamily.

It is found in the mitochondrion. In terms of biological role, interacts genetically with prohibitins and thus may be involved in the mitochondrial lipid metabolism. The chain is Genetic interactor of prohibitins 3, mitochondrial (GEP3) from Saccharomyces cerevisiae (strain Zymaflore VL3) (Baker's yeast).